Consider the following 96-residue polypeptide: Secreted RxLR effector protein 123 (96 aa).

The first 22 residues, 1 to 22 (MVGAYYVGIALLVAGGSQTAAG), serve as a signal peptide directing secretion. Residues 49-70 (RFLRKSRNPKDNLMLSEANEER) carry the RxLR-dEER motif. Positions 57 to 96 (PKDNLMLSEANEERTPSSPSNSLTEFIVSEPITTNVMRTE) are disordered. The span at 87-96 (PITTNVMRTE) shows a compositional bias: polar residues.

This sequence belongs to the RxLR effector family.

Its subcellular location is the secreted. It is found in the host nucleus. It localises to the host cytoplasm. Its function is as follows. Secreted effector that dos not suppress the host cell death induced by cell death-inducing proteins. This is Secreted RxLR effector protein 123 from Plasmopara viticola (Downy mildew of grapevine).